The primary structure comprises 306 residues: Apolipoprotein E (306 aa).

An N-terminal signal peptide occupies residues 1-18 (MKVLWAVLVVTLLAGCQA). Tandem repeats lie at residues 81 to 102 (VLME…QELG), 103 to 124 (PMAE…ARLG), 125 to 146 (ADME…TMLG), 147 to 168 (QSAE…KRLL), 169 to 190 (RDAE…EGAE), 191 to 212 (RGVS…LRAA), 213 to 230 (QTSQ…ERLR), and 231 to 252 (GRLE…EQME). An 8 X 22 AA approximate tandem repeats region spans residues 81–252 (VLMEDTMKEV…RLDVVREQME (172 aa)). Methionine sulfoxide is present on Met-144. A Phosphoserine modification is found at Ser-148. The interval 159–169 (HLRKLRKRLLR) is LDL and other lipoprotein receptors binding. Residue 163–166 (LRKR) participates in heparin binding. Residues 211–280 (AAQTSQPLRE…GWFEPVVEDM (70 aa)) are lipid-binding and lipoprotein association. 226–233 (GERLRGRL) is a binding site for heparin. Residues 268 to 280 (RLKGWFEPVVEDM) are specificity for association with VLDL.

Belongs to the apolipoprotein A1/A4/E family. Homotetramer. May interact with ABCA1; functionally associated with ABCA1 in the biogenesis of HDLs. May interact with APP/A4 amyloid-beta peptide; the interaction is extremely stable in vitro but its physiological significance is unclear. May interact with MAPT. May interact with MAP2. In the cerebrospinal fluid, interacts with secreted SORL1. Interacts with PMEL; this allows the loading of PMEL luminal fragment on ILVs to induce fibril nucleation. Post-translationally, APOE exists as multiple glycosylated and sialylated glycoforms within cells and in plasma. The extent of glycosylation and sialylation are tissue and context specific. Glycated in plasma VLDL. In terms of processing, phosphorylated by FAM20C in the extracellular medium.

It localises to the secreted. It is found in the extracellular space. Its subcellular location is the extracellular matrix. The protein resides in the extracellular vesicle. The protein localises to the endosome. It localises to the multivesicular body. In terms of biological role, APOE is an apolipoprotein, a protein associating with lipid particles, that mainly functions in lipoprotein-mediated lipid transport between organs via the plasma and interstitial fluids. APOE is a core component of plasma lipoproteins and is involved in their production, conversion and clearance. Apolipoproteins are amphipathic molecules that interact both with lipids of the lipoprotein particle core and the aqueous environment of the plasma. As such, APOE associates with chylomicrons, chylomicron remnants, very low density lipoproteins (VLDL) and intermediate density lipoproteins (IDL) but shows a preferential binding to high-density lipoproteins (HDL). It also binds a wide range of cellular receptors including the LDL receptor/LDLR, the LDL receptor-related proteins LRP1, LRP2 and LRP8 and the very low-density lipoprotein receptor/VLDLR that mediate the cellular uptake of the APOE-containing lipoprotein particles. Finally, APOE also has a heparin-binding activity and binds heparan-sulfate proteoglycans on the surface of cells, a property that supports the capture and the receptor-mediated uptake of APOE-containing lipoproteins by cells. A main function of APOE is to mediate lipoprotein clearance through the uptake of chylomicrons, VLDLs, and HDLs by hepatocytes. APOE is also involved in the biosynthesis by the liver of VLDLs as well as their uptake by peripheral tissues ensuring the delivery of triglycerides and energy storage in muscle, heart and adipose tissues. By participating in the lipoprotein-mediated distribution of lipids among tissues, APOE plays a critical role in plasma and tissues lipid homeostasis. APOE is also involved in two steps of reverse cholesterol transport, the HDLs-mediated transport of cholesterol from peripheral tissues to the liver, and thereby plays an important role in cholesterol homeostasis. First, it is functionally associated with ABCA1 in the biogenesis of HDLs in tissues. Second, it is enriched in circulating HDLs and mediates their uptake by hepatocytes. APOE also plays an important role in lipid transport in the central nervous system, regulating neuron survival and sprouting. In Hystrix brachyura (Malayan porcupine), this protein is Apolipoprotein E (APOE).